The following is a 306-amino-acid chain: Olfactory receptor 8G17 (306 aa).

The Extracellular segment spans residues 1 to 28; the sequence is MEKGNQSTVNKFFLSGLTEQPELQLPLF. An N-linked (GlcNAc...) asparagine glycan is attached at N5. The chain crosses the membrane as a helical span at residues 29-49; it reads LLFLGIYLLTVLGNLGMIILI. The Cytoplasmic segment spans residues 50 to 56; that stretch reads LLSSYLH. Residues 57–77 form a helical membrane-spanning segment; sequence TPMYFFLSSLSFIDFCQSTVI. Residues 78–97 lie on the Extracellular side of the membrane; the sequence is TPKMLVKFVREKNEISYPEC. The helical transmembrane segment at 98–118 threads the bilayer; the sequence is ITQLCFFVIFAVSESYMLAAM. The Cytoplasmic portion of the chain corresponds to 119-143; it reads AYDRYVAICSPLLYSSIMSQHKCLS. A helical membrane pass occupies residues 144-164; the sequence is LVLGVYILGIVCASAHVGCIF. Residues 165-196 lie on the Extracellular side of the membrane; sequence RIDFCKSDLINHYFCDLISILNLSCSNIFVND. A helical membrane pass occupies residues 197 to 217; that stretch reads LVILIFSLINTIFPTLTILSS. Residues 218–236 are Cytoplasmic-facing; it reads YAFIIISILRIKSTEGRSK. A helical membrane pass occupies residues 237–257; it reads AFSTCSSHISAVAIFYISAGF. Residues 258 to 271 are Extracellular-facing; the sequence is TYLNPSSSHSMDEG. A helical membrane pass occupies residues 272 to 292; it reads KVSSIFYTIIVPMLNPLIYSL. At 293-306 the chain is on the cytoplasmic side; that stretch reads RNKDVKIALKKMIE.

It belongs to the G-protein coupled receptor 1 family.

It is found in the cell membrane. In terms of biological role, odorant receptor. The polypeptide is Olfactory receptor 8G17 (Mus musculus (Mouse)).